The chain runs to 147 residues: Ribonuclease VapC43 (147 aa).

The PINc domain maps to C3–H139. Mg(2+) contacts are provided by D5 and D108.

The protein belongs to the PINc/VapC protein family. It depends on Mg(2+) as a cofactor.

Toxic component of a type II toxin-antitoxin (TA) system. An RNase. Its toxic effect is neutralized by coexpression with cognate antitoxin VapB43. The polypeptide is Ribonuclease VapC43 (Mycobacterium tuberculosis (strain CDC 1551 / Oshkosh)).